Here is a 681-residue protein sequence, read N- to C-terminus: Type VI secretion system spike protein VgrG2 (681 aa).

A disordered region spans residues 284 to 309 (AVAGSGKSNSSALQPGQTFSLTEHPN). The segment covering 289–309 (GKSNSSALQPGQTFSLTEHPN) has biased composition (polar residues).

Belongs to the VgrG protein family.

Its function is as follows. Part of the type VI secretion system specialized secretion system, which delivers several virulence factors in both prokaryotic and eukaryotic cells during infection. Plays an essential role in bacterial mobility and biofilm formation. This is Type VI secretion system spike protein VgrG2 from Aeromonas hydrophila.